The sequence spans 275 residues: Peptidoglycan-N-acetylglucosamine deacetylase BC_1960 (275 aa).

Positions 81–262 (AEVALTFDDG…QLKTKGARFV (182 aa)) constitute a NodB homology domain. The active-site Proton acceptor is the aspartate 88. Zn(2+) contacts are provided by aspartate 89, histidine 139, and histidine 143. Position 179 is a 2-hydroxyproline; partial (proline 179). Residue histidine 233 is the Proton donor of the active site.

Belongs to the polysaccharide deacetylase family. Zn(2+) serves as cofactor. In terms of processing, hydroxylated on Pro-179. Hydroxylation alters the active site and enhances significantly deacetylase activity, probably by creating a more favorable environment for transition-state stabilization. It might be autocatalytic.

The catalysed reaction is peptidoglycan-N-acetyl-D-glucosamine + H2O = peptidoglycan-D-glucosamine + acetate.. Deacetylase activity is stimulated by hydroxylation on Pro-179. Inhibited by CuCl(2) and ZnCl(2). Inhibited by the hydroxamate N-hydroxy-4-(naphthalene-1-yl)benzamide (NHNB). Functionally, catalyzes the deacetylation of N-acetylglucosamine (GlcNAc) residues in peptidoglycan. Also acts on soluble chitin substrates and N-acetylchitooligomers. Acts on cell wall peptidoglycan from the Gram-positive bacteria B.cereus and B.subtilis and the Gram-negative bacterium H.pylori. Not active on acetylated xylan. The protein is Peptidoglycan-N-acetylglucosamine deacetylase BC_1960 of Bacillus cereus (strain ATCC 14579 / DSM 31 / CCUG 7414 / JCM 2152 / NBRC 15305 / NCIMB 9373 / NCTC 2599 / NRRL B-3711).